The primary structure comprises 1533 residues: Glycogen debranching enzyme (1533 aa).

Serine 64 carries the phosphoserine modification. Residues aspartate 527, histidine 530, and aspartate 628 contribute to the active site.

This sequence belongs to the glycogen debranching enzyme family. As to quaternary structure, monomer. Interacts with NHLRC1/malin. Ubiquitinated.

Its subcellular location is the cytoplasm. It carries out the reaction Transfers a segment of a (1-&gt;4)-alpha-D-glucan to a new position in an acceptor, which may be glucose or a (1-&gt;4)-alpha-D-glucan.. The catalysed reaction is Hydrolysis of (1-&gt;6)-alpha-D-glucosidic branch linkages in glycogen phosphorylase limit dextrin.. Multifunctional enzyme acting as 1,4-alpha-D-glucan:1,4-alpha-D-glucan 4-alpha-D-glycosyltransferase and amylo-1,6-glucosidase in glycogen degradation. This is Glycogen debranching enzyme (AGL) from Canis lupus familiaris (Dog).